A 133-amino-acid chain; its full sequence is Small ribosomal subunit protein uS8 (133 aa).

Belongs to the universal ribosomal protein uS8 family. In terms of assembly, part of the 30S ribosomal subunit. Contacts proteins S5 and S12.

One of the primary rRNA binding proteins, it binds directly to 16S rRNA central domain where it helps coordinate assembly of the platform of the 30S subunit. In Amoebophilus asiaticus (strain 5a2), this protein is Small ribosomal subunit protein uS8.